A 152-amino-acid polypeptide reads, in one-letter code: Endoribonuclease YbeY (152 aa).

Positions 113, 117, and 123 each coordinate Zn(2+).

It belongs to the endoribonuclease YbeY family. Requires Zn(2+) as cofactor.

The protein localises to the cytoplasm. In terms of biological role, single strand-specific metallo-endoribonuclease involved in late-stage 70S ribosome quality control and in maturation of the 3' terminus of the 16S rRNA. This chain is Endoribonuclease YbeY, found in Janthinobacterium sp. (strain Marseille) (Minibacterium massiliensis).